Reading from the N-terminus, the 245-residue chain is 14-3-3 protein zeta (245 aa).

It belongs to the 14-3-3 family. As to quaternary structure, homodimer. In terms of tissue distribution, present in all adult tissues examined with the highest levels in the brain.

It is found in the cytoplasm. Its function is as follows. Adapter protein implicated in the regulation of a large spectrum of both general and specialized signaling pathways. Binds to a large number of partners, usually by recognition of a phosphoserine or phosphothreonine motif. Binding generally results in the modulation of the activity of the binding partner. The chain is 14-3-3 protein zeta (ywhaz) from Xenopus laevis (African clawed frog).